Reading from the N-terminus, the 773-residue chain is C-Maf-inducing protein (773 aa).

The disordered stretch occupies residues 1 to 28; it reads MDVTSSSGGGDPRQIEETKPLLGSDVSG. Positions 54–163 constitute a PH domain; it reads LLQEGDIQVC…HSLQWKKKIY (110 aa). A phosphoserine mark is found at Ser349, Ser377, Ser382, and Ser660. 4 LRR repeats span residues 663 to 686, 687 to 707, 712 to 732, and 736 to 756; these read NLEN…IKLP, SLKQ…RLLS, MLQV…LALS, and SLCS…EDLK.

In terms of assembly, interacts with FLNA.

The protein resides in the nucleus. Its subcellular location is the cytoplasm. Functionally, plays a role in T-cell signaling pathway. The sequence is that of C-Maf-inducing protein (Cmip) from Mus musculus (Mouse).